A 295-amino-acid chain; its full sequence is Acetylglutamate kinase (295 aa).

Residues 70–71 (GG), Arg92, and Asn191 contribute to the substrate site.

It belongs to the acetylglutamate kinase family. ArgB subfamily.

It is found in the cytoplasm. It catalyses the reaction N-acetyl-L-glutamate + ATP = N-acetyl-L-glutamyl 5-phosphate + ADP. Its pathway is amino-acid biosynthesis; L-arginine biosynthesis; N(2)-acetyl-L-ornithine from L-glutamate: step 2/4. Functionally, catalyzes the ATP-dependent phosphorylation of N-acetyl-L-glutamate. The sequence is that of Acetylglutamate kinase from Mycobacterium avium (strain 104).